Here is a 577-residue protein sequence, read N- to C-terminus: MKTSQLFYKTSKNANKEAAVLSYELLEKAGYIFKTAKGIYTYTPLFWRVALKMMDIVREELNAIGGQELVLPILHPAELWQKTGRWEAFRSEGLLYTLTDREDKELCLAPTHEEVVSMFVSQWLSGRKQLPIHLYQIATKFRDEIRPRFGLMRAREFLMEDSYTFSDSPEQMNEQYAKLRQAYQNIFDRLEIKYVIVEADGGKIGKGKSEEFHVLCSLGEDTICVSGAYGANIEAAVSQPPQYTYDKEHLPIEEVATPDVRTMEHLQDFFSLPSHKIIKTLVVKLSYGEKDKFVAISIRGDRQINLTKIRSKLNADECILASDEELQQHLGTEKGFIGPLNCPIELYADETTRCMTNFICAGNTKDKHYKNVNWDRDIPRPEYGDFLLAEAGDLCPANGNAPYEVFEGVEVAHIFNLGTRYTECFEVGFQNEQEEQQTCWMGTYGIGIGRTLAACIEQLADDRGIVWPKAIAPFDIAILYNGGDAASQEAAEKIYKDLQNYGYAPLLDDRNERLGFKLKDSDLIGIPYKLILGKTFQNSGVLEIESRSREKFFVEPKDFFNWCKNYFPKPRGFSPIS.

The protein belongs to the class-II aminoacyl-tRNA synthetase family. ProS type 1 subfamily. In terms of assembly, homodimer.

It is found in the cytoplasm. It carries out the reaction tRNA(Pro) + L-proline + ATP = L-prolyl-tRNA(Pro) + AMP + diphosphate. Catalyzes the attachment of proline to tRNA(Pro) in a two-step reaction: proline is first activated by ATP to form Pro-AMP and then transferred to the acceptor end of tRNA(Pro). As ProRS can inadvertently accommodate and process non-cognate amino acids such as alanine and cysteine, to avoid such errors it has two additional distinct editing activities against alanine. One activity is designated as 'pretransfer' editing and involves the tRNA(Pro)-independent hydrolysis of activated Ala-AMP. The other activity is designated 'posttransfer' editing and involves deacylation of mischarged Ala-tRNA(Pro). The misacylated Cys-tRNA(Pro) is not edited by ProRS. This Chlamydia caviae (strain ATCC VR-813 / DSM 19441 / 03DC25 / GPIC) (Chlamydophila caviae) protein is Proline--tRNA ligase.